We begin with the raw amino-acid sequence, 227 residues long: E3 ubiquitin-protein ligase ZNRF1 (227 aa).

Positions 1–38 (MGGKQSTAARSRGPFPGVSTDDSAVPPPGGAPHFGHYR) are disordered. A lipid anchor (N-myristoyl glycine) is attached at G2. The required for endosomal and lysosomal localization and myristoylation stretch occupies residues 2–10 (GGKQSTAAR). 3 positions are modified to phosphoserine: S50, S52, and S53. A disordered region spans residues 77 to 105 (RGAGDAERAPGSGGSASDSTYAHGNGYQE). Y103 is modified (phosphotyrosine). Residue S123 is modified to Phosphoserine. An RING-type; atypical zinc finger spans residues 184 to 225 (CVICLEELLQGDTIARLPCLCIYHKSCIDSWFEVNRSCPEHP).

As to quaternary structure, interacts with AKT1, GLUL and TUBB2A. Interacts with ZNRF2. Interacts (via its RING domain) with UBE2N. Interacts (when phosphorylated) with YWHAE. N-myristoylation targets ZNRF1 to intracellular membranes. Post-translationally, phosphorylated by SRC at Tyr-103; leading to 'Lys-63'-linked ubiquitination of TLR3, lysosomal trafficking and degradation.

Its subcellular location is the endosome. It is found in the lysosome. The protein localises to the membrane. The protein resides in the cytoplasmic vesicle. It localises to the secretory vesicle. Its subcellular location is the synaptic vesicle membrane. It catalyses the reaction S-ubiquitinyl-[E2 ubiquitin-conjugating enzyme]-L-cysteine + [acceptor protein]-L-lysine = [E2 ubiquitin-conjugating enzyme]-L-cysteine + N(6)-ubiquitinyl-[acceptor protein]-L-lysine.. Its pathway is protein modification; protein ubiquitination. In terms of biological role, E3 ubiquitin-protein ligase that plays a role in different processes including cell differentiation, receptor recycling or regulation of inflammation. Mediates the ubiquitination of AKT1 and GLUL, thereby playing a role in neuron cells differentiation. Plays a role in the establishment and maintenance of neuronal transmission and plasticity. Regulates Schwann cells differentiation by mediating ubiquitination of GLUL. Promotes neurodegeneration by mediating 'Lys-48'-linked polyubiquitination and subsequent degradation of AKT1 in axons: degradation of AKT1 prevents AKT1-mediated phosphorylation of GSK3B, leading to GSK3B activation and phosphorylation of DPYSL2/CRMP2 followed by destabilization of microtubule assembly in axons. Ubiquitinates the Na(+)/K(+) ATPase alpha-1 subunit/ATP1A1 and thereby influences its endocytosis and/or degradation. Controls ligand-induced EGFR signaling via mediating receptor ubiquitination and recruitment of the ESCRT machinery. Acts as a negative feedback mechanism controlling TLR3 trafficking by mediating TLR3 'Lys-63'-linked polyubiquitination to reduce type I IFN production. Modulates inflammation by promoting caveolin-1/CAV1 ubiquitination and degradation to regulate TLR4-activated immune response. The sequence is that of E3 ubiquitin-protein ligase ZNRF1 (ZNRF1) from Bos taurus (Bovine).